A 1210-amino-acid polypeptide reads, in one-letter code: ATPase family AAA domain-containing protein At1g05910 (1210 aa).

The span at 1 to 11 (MHPKRSSQGDG) shows a compositional bias: polar residues. Disordered stretches follow at residues 1-32 (MHPKRSSQGDGSVTKPVRTSDRLRRRPKLHGR) and 63-291 (LHKG…RTDD). Residues 97–109 (DYTDSSGAEDEDM) show a composition bias toward acidic residues. The span at 130–146 (SRKDMDAELAPRREGLR) shows a compositional bias: basic and acidic residues. Residues 167–226 (DTSEEKDGQDETENGNELDDADDGENEVEAEDEGNGEDEGDGEDEGEEDGDDDEEGDEEQ) show a composition bias toward acidic residues. The segment covering 227 to 244 (EGRKRYDLRNRAEVRRMP) has biased composition (basic and acidic residues). A compositionally biased stretch (basic residues) spans 276 to 286 (GGSRPHKRHRF). 422-429 (GPPGTGKT) serves as a coordination point for ATP. A disordered region spans residues 856 to 883 (LNGKPDGPQPLPELPKVPKEPTGPKPAE). In terms of domain architecture, Bromo spans 897–1000 (RLRMCLRDVC…DVVHGMLSQM (104 aa)). A compositionally biased stretch (basic and acidic residues) spans 1057–1070 (DRDYEGLKKPKKTT). Residues 1057-1151 (DRDYEGLKKP…EISSRTESVK (95 aa)) form a disordered region. Residues 1080 to 1090 (DKSQNQDSGQE) show a composition bias toward polar residues. Basic and acidic residues-rich tracts occupy residues 1108-1123 (DGDREDQSEPPSKEAS) and 1138-1151 (KSDKEISSRTESVK).

It belongs to the AAA ATPase family.

The sequence is that of ATPase family AAA domain-containing protein At1g05910 from Arabidopsis thaliana (Mouse-ear cress).